The chain runs to 365 residues: GTPase Obg (365 aa).

The 177-residue stretch at 1–177 folds into the Obg domain; that stretch reads MFTDYVRILA…GQFLLELKTI (177 aa). The segment at 64 to 85 is disordered; the sequence is QFAEDGQPGKGQKRKGRDGKNL. Residues 178 to 348 form the OBG-type G domain; sequence ADVGFVGLPN…FLNSCRKSFE (171 aa). Residues 184–191, 209–213, 231–234, 300–303, and 329–331 contribute to the GTP site; these read GLPNSGKS, FTTLK, DIPG, NKVD, and SAL. Ser-191 and Thr-211 together coordinate Mg(2+).

This sequence belongs to the TRAFAC class OBG-HflX-like GTPase superfamily. OBG GTPase family. In terms of assembly, monomer. It depends on Mg(2+) as a cofactor.

It localises to the cytoplasm. Its function is as follows. An essential GTPase which binds GTP, GDP and possibly (p)ppGpp with moderate affinity, with high nucleotide exchange rates and a fairly low GTP hydrolysis rate. Plays a role in control of the cell cycle, stress response, ribosome biogenesis and in those bacteria that undergo differentiation, in morphogenesis control. This Methylacidiphilum infernorum (isolate V4) (Methylokorus infernorum (strain V4)) protein is GTPase Obg.